A 473-amino-acid polypeptide reads, in one-letter code: MAP kinase-activated protein kinase 5 (473 aa).

Positions Ile-22 to Leu-304 constitute a Protein kinase domain. ATP is bound by residues Leu-28–Val-36 and Lys-51. Ser-115 carries the post-translational modification Phosphoserine; by PKA. Asp-148 functions as the Proton acceptor in the catalytic mechanism. Position 182 is a phosphothreonine; by MAPK11, MAPK14, MAPK4, MAPK6 and PKA (Thr-182). Phosphoserine occurs at positions 212 and 354. A coiled-coil region spans residues Glu-409–Ser-440.

The protein belongs to the protein kinase superfamily. CAMK Ser/Thr protein kinase family. As to quaternary structure, interacts with ERK3/MAPK6 and ERK4/MAPK4 (via FRIEDE motif); the interaction is direct. Interacts with YWHAE; the interaction prevents phosphorylation of HSP27/HSPB1 leading to disrupt F-actin polymerization. Interacts with SQSTM1. In terms of processing, phosphorylated on Thr-182 ERK3/MAPK6 or ERK4/MAPK4; which is the regulatory phosphorylation site and is located on the T-loop/loop 12, leading to activation. Phosphorylation at Thr-182 by p38-alpha/MAPK14, p38-beta/MAPK11 is subject to debate. Phosphorylated at Ser-115 by PKA/PRKACA, leading to localization to the cytoplasm. Autophosphorylated. As to expression, expressed ubiquitously.

The protein resides in the cytoplasm. Its subcellular location is the nucleus. It carries out the reaction L-seryl-[protein] + ATP = O-phospho-L-seryl-[protein] + ADP + H(+). It catalyses the reaction L-threonyl-[protein] + ATP = O-phospho-L-threonyl-[protein] + ADP + H(+). Activated following phosphorylation at Thr-182 by p38-alpha/MAPK14, p38-beta/MAPK11, ERK2/MAPK1, ERK3/MAPK6, and ERK4/MAPK4. Activated by stress-related extracellular stimuli; such as H(2)O(2), arsenite, anisomycin TNF alpha and also PMA and the calcium ionophore A23187; but to a lesser extent. In vitro, activated by SQSTM1. Inhibited by diterpenoid alkaloid noroxoaconitine. In terms of biological role, tumor suppressor serine/threonine-protein kinase involved in mTORC1 signaling and post-transcriptional regulation. Phosphorylates FOXO3, ERK3/MAPK6, ERK4/MAPK4, HSP27/HSPB1, p53/TP53 and RHEB. Acts as a tumor suppressor by mediating Ras-induced senescence and phosphorylating p53/TP53. Involved in post-transcriptional regulation of MYC by mediating phosphorylation of FOXO3: phosphorylation of FOXO3 leads to promote nuclear localization of FOXO3, enabling expression of miR-34b and miR-34c, 2 post-transcriptional regulators of MYC that bind to the 3'UTR of MYC transcript and prevent MYC translation. Acts as a negative regulator of mTORC1 signaling by mediating phosphorylation and inhibition of RHEB. Part of the atypical MAPK signaling via its interaction with ERK3/MAPK6 or ERK4/MAPK4: the precise role of the complex formed with ERK3/MAPK6 or ERK4/MAPK4 is still unclear, but the complex follows a complex set of phosphorylation events: upon interaction with atypical MAPK (ERK3/MAPK6 or ERK4/MAPK4), ERK3/MAPK6 (or ERK4/MAPK4) is phosphorylated and then mediates phosphorylation and activation of MAPKAPK5, which in turn phosphorylates ERK3/MAPK6 (or ERK4/MAPK4). Mediates phosphorylation of HSP27/HSPB1 in response to PKA/PRKACA stimulation, inducing F-actin rearrangement. The chain is MAP kinase-activated protein kinase 5 (MAPKAPK5) from Homo sapiens (Human).